Consider the following 178-residue polypeptide: Dual-action ribosomal maturation protein DarP (178 aa).

Belongs to the DarP family.

Its subcellular location is the cytoplasm. In terms of biological role, member of a network of 50S ribosomal subunit biogenesis factors which assembles along the 30S-50S interface, preventing incorrect 23S rRNA structures from forming. Promotes peptidyl transferase center (PTC) maturation. This chain is Dual-action ribosomal maturation protein DarP, found in Haemophilus influenzae (strain 86-028NP).